Consider the following 382-residue polypeptide: UDP-N-acetylglucosamine--N-acetylmuramyl-(pentapeptide) pyrophosphoryl-undecaprenol N-acetylglucosamine transferase (382 aa).

UDP-N-acetyl-alpha-D-glucosamine contacts are provided by residues 11 to 13, asparagine 124, arginine 165, serine 200, isoleucine 254, and glutamine 299; that span reads TGG.

Belongs to the glycosyltransferase 28 family. MurG subfamily.

It is found in the cell inner membrane. The enzyme catalyses di-trans,octa-cis-undecaprenyl diphospho-N-acetyl-alpha-D-muramoyl-L-alanyl-D-glutamyl-meso-2,6-diaminopimeloyl-D-alanyl-D-alanine + UDP-N-acetyl-alpha-D-glucosamine = di-trans,octa-cis-undecaprenyl diphospho-[N-acetyl-alpha-D-glucosaminyl-(1-&gt;4)]-N-acetyl-alpha-D-muramoyl-L-alanyl-D-glutamyl-meso-2,6-diaminopimeloyl-D-alanyl-D-alanine + UDP + H(+). It participates in cell wall biogenesis; peptidoglycan biosynthesis. In terms of biological role, cell wall formation. Catalyzes the transfer of a GlcNAc subunit on undecaprenyl-pyrophosphoryl-MurNAc-pentapeptide (lipid intermediate I) to form undecaprenyl-pyrophosphoryl-MurNAc-(pentapeptide)GlcNAc (lipid intermediate II). The sequence is that of UDP-N-acetylglucosamine--N-acetylmuramyl-(pentapeptide) pyrophosphoryl-undecaprenol N-acetylglucosamine transferase from Nitratidesulfovibrio vulgaris (strain DSM 19637 / Miyazaki F) (Desulfovibrio vulgaris).